An 842-amino-acid chain; its full sequence is Ionotropic receptor 21a (842 aa).

An N-terminal signal peptide occupies residues Met1 to Ala15. Asn325 carries an N-linked (GlcNAc...) asparagine glycan. 2 helical membrane passes run Trp405–Thr425 and Trp437–Phe457. Asn469 carries an N-linked (GlcNAc...) asparagine glycan. A helical transmembrane segment spans residues Trp479 to Leu499. 4 N-linked (GlcNAc...) asparagine glycosylation sites follow: Asn533, Asn558, Asn583, and Asn588. Residues Met680–Val700 form a helical membrane-spanning segment. The interval Trp722–Ala745 is disordered. Residues Asn765 and Asn797 are each glycosylated (N-linked (GlcNAc...) asparagine).

The protein belongs to the glutamate-gated ion channel (TC 1.A.10.1) family. Expressed in the dorsal organ cool cells. In the antenna, expressed in approximately six neurons in the arista as well as five to ten neurons near the third chamber of the sacculus.

Its subcellular location is the cell membrane. Its function is as follows. Integral part of a neural sensory system in the antenna that provides the neural basis for the response to environmental changes in temperature (thermosensation). Together with Ir25a and Ir93a, mediates the response of the dorsal organ cool cells, a trio of cool-responsive neurons, to cooling and is required for cool avoidance behavior. The chain is Ionotropic receptor 21a from Drosophila melanogaster (Fruit fly).